The sequence spans 278 residues: Putative phosphoenolpyruvate synthase regulatory protein (278 aa).

Residue 158–165 (GVSRSGKT) coordinates ADP.

This sequence belongs to the pyruvate, phosphate/water dikinase regulatory protein family. PSRP subfamily.

It catalyses the reaction [pyruvate, water dikinase] + ADP = [pyruvate, water dikinase]-phosphate + AMP + H(+). The catalysed reaction is [pyruvate, water dikinase]-phosphate + phosphate + H(+) = [pyruvate, water dikinase] + diphosphate. In terms of biological role, bifunctional serine/threonine kinase and phosphorylase involved in the regulation of the phosphoenolpyruvate synthase (PEPS) by catalyzing its phosphorylation/dephosphorylation. This chain is Putative phosphoenolpyruvate synthase regulatory protein, found in Acinetobacter baylyi (strain ATCC 33305 / BD413 / ADP1).